The sequence spans 215 residues: MESSRGKPGLNGSGGGAAAFDYSSRRGYYTGAGAALPPLAAGSRAPPVDPCCVVLRVFVLLGTLASAVVMAADRQSTTVQIAAGEELAPPLRVPVTAKWTYSSAFVYFVVANAMVFAFSAAALAAVRRRSAVVPVMVGDLVAMALLFSAVGAAAQFGLLGERGNAHVRWAKVCDVYGPFCERAMAAVVVALIAAFADLVLLMLTILTIHKASSYY.

The Cytoplasmic portion of the chain corresponds to 1–51; it reads MESSRGKPGLNGSGGGAAAFDYSSRRGYYTGAGAALPPLAAGSRAPPVDPC. The helical transmembrane segment at 52-72 threads the bilayer; sequence CVVLRVFVLLGTLASAVVMAA. Residues 73–103 are Extracellular-facing; that stretch reads DRQSTTVQIAAGEELAPPLRVPVTAKWTYSS. Residues 104-124 traverse the membrane as a helical segment; that stretch reads AFVYFVVANAMVFAFSAAALA. Residues 125–130 are Cytoplasmic-facing; that stretch reads AVRRRS. Residues 131-151 traverse the membrane as a helical segment; it reads AVVPVMVGDLVAMALLFSAVG. Over 152–185 the chain is Extracellular; it reads AAAQFGLLGERGNAHVRWAKVCDVYGPFCERAMA. The chain crosses the membrane as a helical span at residues 186–206; sequence AVVVALIAAFADLVLLMLTIL. Residues 207–215 are Cytoplasmic-facing; the sequence is TIHKASSYY.

The protein belongs to the Casparian strip membrane proteins (CASP) family. In terms of assembly, homodimer and heterodimers.

It localises to the cell membrane. This is CASP-like protein 1E1 from Oryza sativa subsp. japonica (Rice).